A 509-amino-acid chain; its full sequence is ATP synthase subunit alpha (509 aa).

169–176 (GDRQTGKT) is an ATP binding site.

The protein belongs to the ATPase alpha/beta chains family. As to quaternary structure, F-type ATPases have 2 components, CF(1) - the catalytic core - and CF(0) - the membrane proton channel. CF(1) has five subunits: alpha(3), beta(3), gamma(1), delta(1), epsilon(1). CF(0) has three main subunits: a(1), b(2) and c(9-12). The alpha and beta chains form an alternating ring which encloses part of the gamma chain. CF(1) is attached to CF(0) by a central stalk formed by the gamma and epsilon chains, while a peripheral stalk is formed by the delta and b chains.

It is found in the cell inner membrane. It carries out the reaction ATP + H2O + 4 H(+)(in) = ADP + phosphate + 5 H(+)(out). Produces ATP from ADP in the presence of a proton gradient across the membrane. The alpha chain is a regulatory subunit. The chain is ATP synthase subunit alpha from Paramagnetospirillum magneticum (strain ATCC 700264 / AMB-1) (Magnetospirillum magneticum).